Reading from the N-terminus, the 321-residue chain is Cytochrome c biogenesis protein CcsA (321 aa).

The next 7 membrane-spanning stretches (helical) occupy residues I9–L29, G44–G64, L68–I88, M143–I163, V226–N246, T260–H274, and V289–I309.

This sequence belongs to the CcmF/CycK/Ccl1/NrfE/CcsA family. In terms of assembly, may interact with Ccs1.

The protein localises to the plastid. Its subcellular location is the chloroplast thylakoid membrane. Required during biogenesis of c-type cytochromes (cytochrome c6 and cytochrome f) at the step of heme attachment. This chain is Cytochrome c biogenesis protein CcsA, found in Oryza sativa (Rice).